The chain runs to 688 residues: Elongation factor G (688 aa).

In terms of domain architecture, tr-type G spans 8–282 (EKTRNIGIMA…AIIDYLPSPM (275 aa)). GTP is bound by residues 17–24 (AHIDAGKT), 81–85 (DTPGH), and 135–138 (NKMD).

Belongs to the TRAFAC class translation factor GTPase superfamily. Classic translation factor GTPase family. EF-G/EF-2 subfamily.

The protein resides in the cytoplasm. Its function is as follows. Catalyzes the GTP-dependent ribosomal translocation step during translation elongation. During this step, the ribosome changes from the pre-translocational (PRE) to the post-translocational (POST) state as the newly formed A-site-bound peptidyl-tRNA and P-site-bound deacylated tRNA move to the P and E sites, respectively. Catalyzes the coordinated movement of the two tRNA molecules, the mRNA and conformational changes in the ribosome. The polypeptide is Elongation factor G (fusA) (Apple proliferation phytoplasma).